A 376-amino-acid chain; its full sequence is MATSHLLAAASSTAASSATFRPPLLSLRSPPPSSLRLNRRRHFQVVRAAETDKETKANAPEKAPAGGSSFNQLLGIKGAKQENDIWKIRLQLTKPVTWPPLVWGVLCGAAASGNFHWTVEDVAKSIVCMIMSGPCLTGYTQTINDWYDRDIDAINEPYRPIPSGAISENEVITQIWALLLAGLGLGALLDVWAGHDFPIIFYLAVGGSLLSYIYSAPPLKLKQNGWIGNFALGASYIGLPWWAGQALFGTLTPDIVVLTSLYSIAGLGIAIVNDFKSVEGDRALGLQSLPVAFGMETAKWICVGAIDITQLSVAGYLFSSGKPYYALALLGLTIPQVVFQFQYFLKDPVKYDVKYQASAQPFFVLGLLVTALATSH.

The transit peptide at 1-47 directs the protein to the chloroplast; that stretch reads MATSHLLAAASSTAASSATFRPPLLSLRSPPPSSLRLNRRRHFQVVR. Residues 48–69 form a disordered region; that stretch reads AAETDKETKANAPEKAPAGGSS. The next 8 membrane-spanning stretches (helical) occupy residues 95-115, 171-191, 197-217, 230-250, 255-275, 300-320, 325-345, and 355-375; these read PVTW…SGNF, VITQ…LLDV, FPII…YSAP, FALG…LFGT, IVVL…VNDF, WICV…LFSS, YALA…QYFL, and YQAS…LATS.

It belongs to the UbiA prenyltransferase family. Chlorophyll synthase subfamily.

The protein resides in the plastid. The protein localises to the chloroplast membrane. It catalyses the reaction phytyl diphosphate + chlorophyllide a + H(+) = chlorophyll a + diphosphate. Its function is as follows. Involved in one of the last steps of the biosynthesis of chlorophyll a. This chain is Chlorophyll synthase, chloroplastic (CHLG), found in Oryza sativa subsp. japonica (Rice).